Here is a 399-residue protein sequence, read N- to C-terminus: Enoyl-[acyl-carrier-protein] reductase [NADH] (399 aa).

NAD(+) is bound by residues 49–54 (GASSGY), 75–76 (FE), 112–113 (DA), and 141–142 (LA). Residue tyrosine 227 participates in substrate binding. The active-site Proton donor is the tyrosine 237. Residues lysine 246 and 272-274 (VVT) contribute to the NAD(+) site.

Belongs to the TER reductase family. Monomer.

The catalysed reaction is a 2,3-saturated acyl-[ACP] + NAD(+) = a (2E)-enoyl-[ACP] + NADH + H(+). It participates in lipid metabolism; fatty acid biosynthesis. Involved in the final reduction of the elongation cycle of fatty acid synthesis (FAS II). Catalyzes the reduction of a carbon-carbon double bond in an enoyl moiety that is covalently linked to an acyl carrier protein (ACP). The protein is Enoyl-[acyl-carrier-protein] reductase [NADH] of Pseudomonas putida (strain W619).